We begin with the raw amino-acid sequence, 172 residues long: Exocyst complex component 1-like (172 aa).

The polypeptide is Exocyst complex component 1-like (Mus musculus (Mouse)).